The sequence spans 149 residues: NADH-quinone oxidoreductase subunit A (149 aa).

Transmembrane regions (helical) follow at residues 16–36 (FAVFLLGAFGLCALMLLGAFF), 68–88 (FYLVAMFFVIFDVEALFLYAW), and 98–118 (LGFIEASIFILVLLAGLFYLV).

Belongs to the complex I subunit 3 family. As to quaternary structure, NDH-1 is composed of 13 different subunits. Subunits NuoA, H, J, K, L, M, N constitute the membrane sector of the complex.

Its subcellular location is the cell inner membrane. The enzyme catalyses a quinone + NADH + 5 H(+)(in) = a quinol + NAD(+) + 4 H(+)(out). In terms of biological role, NDH-1 shuttles electrons from NADH, via FMN and iron-sulfur (Fe-S) centers, to quinones in the respiratory chain. The immediate electron acceptor for the enzyme in this species is believed to be ubiquinone. Couples the redox reaction to proton translocation (for every two electrons transferred, four hydrogen ions are translocated across the cytoplasmic membrane), and thus conserves the redox energy in a proton gradient. This chain is NADH-quinone oxidoreductase subunit A, found in Photorhabdus laumondii subsp. laumondii (strain DSM 15139 / CIP 105565 / TT01) (Photorhabdus luminescens subsp. laumondii).